Consider the following 336-residue polypeptide: tRNA N6-adenosine threonylcarbamoyltransferase (336 aa).

The Fe cation site is built by His-114 and His-118. Residues 136–140 (LVSGG), Asp-169, Gly-182, Asp-186, and Asn-275 contribute to the substrate site. Asp-302 lines the Fe cation pocket.

This sequence belongs to the KAE1 / TsaD family. Fe(2+) serves as cofactor.

Its subcellular location is the cytoplasm. It carries out the reaction L-threonylcarbamoyladenylate + adenosine(37) in tRNA = N(6)-L-threonylcarbamoyladenosine(37) in tRNA + AMP + H(+). In terms of biological role, required for the formation of a threonylcarbamoyl group on adenosine at position 37 (t(6)A37) in tRNAs that read codons beginning with adenine. Is involved in the transfer of the threonylcarbamoyl moiety of threonylcarbamoyl-AMP (TC-AMP) to the N6 group of A37, together with TsaE and TsaB. TsaD likely plays a direct catalytic role in this reaction. This Streptococcus agalactiae serotype V (strain ATCC BAA-611 / 2603 V/R) protein is tRNA N6-adenosine threonylcarbamoyltransferase.